The primary structure comprises 705 residues: Phosphatidylinositol 4-phosphate 5-kinase 3 (705 aa).

MORN repeat units lie at residues 58 to 80 (YNGG…DGCM), 81 to 103 (YEGE…SGAT), 104 to 126 (YEGQ…DGDT), 127 to 149 (YRGH…NGDG), 150 to 172 (YQGN…DGNE), 173 to 195 (YVGE…NGNR), and 196 to 218 (YDGL…EEKT). A PIPK domain is found at 321–701 (TVTAGHKNYD…RFRDFINKIF (381 aa)). Residues 661-682 (YDITKKLEHAYKSLHADPASIS) form an activation loop region.

The protein resides in the cell membrane. The enzyme catalyses a 1,2-diacyl-sn-glycero-3-phospho-(1D-myo-inositol 4-phosphate) + ATP = a 1,2-diacyl-sn-glycero-3-phospho-(1D-myo-inositol-4,5-bisphosphate) + ADP + H(+). Its function is as follows. With DRP1A and DRP2B, required for the precise coordination of polar ARAC3/ROP6 and ARAC4/ROP2 placement and subsequent root hair positioning during planar polarity formation in root hair-forming cells, probably by mediating the correct basal-to-planar polarity switching of D6PK into the polar, lipid-enriched domain. This Arabidopsis thaliana (Mouse-ear cress) protein is Phosphatidylinositol 4-phosphate 5-kinase 3.